The following is a 1118-amino-acid chain: Pleckstrin homology domain-containing family A member 7 (1118 aa).

WW domains follow at residues 8–41 and 53–86; these read DTLPEHWSYGVCRDGRVFFINDQLRCTTWLHPRT and SDLPRGWEEGFTEEGASFFIDHNQQTTTFRHPVT. Residues 100-113 are compositionally biased toward basic and acidic residues; the sequence is EEPHPHMSKPERNQ. The tract at residues 100 to 145 is disordered; the sequence is EEPHPHMSKPERNQRPSSMVSETSTAGTTSTLEAKPGPKIVKSSSK. The segment covering 114–131 has biased composition (polar residues); sequence RPSSMVSETSTAGTTSTL. The region spanning 163–281 is the PH domain; that stretch reads PVVVRGWLHK…WVRAMNQAAQ (119 aa). Composition is skewed to basic and acidic residues over residues 334–355 and 434–443; these read FNRREQEEERFRAQRDPLEGRR and HWTKAQKGDG. Disordered stretches follow at residues 334 to 512 and 528 to 629; these read FNRR…RRAH and QFRH…RRSM. The span at 452-481 shows a compositional bias: polar residues; the sequence is LPRQGPSQPLSFPENYQSLPKSTRHLSGSS. Over residues 494–512 the composition is skewed to basic and acidic residues; the sequence is YAQDRASHLKMSSEERRAH. Residues Ser533, Ser542, Ser566, Ser601, Ser605, and Ser609 each carry the phosphoserine modification. Positions 535–693 are interaction with CTNND1; the sequence is TAPIGAGSPE…AESDIDVKLS (159 aa). Over residues 564-579 the composition is skewed to pro residues; sequence PPSPSDIPPPGPPRPF. A compositionally biased stretch (basic and acidic residues) spans 586-602; it reads TPAERVTVKPPEQRRSV. A coiled-coil region spans residues 697 to 798; sequence EQDRILQDLE…LQEQHRRAFF (102 aa). Disordered regions lie at residues 839 to 873 and 886 to 968; these read KTVPLFPHPSVPSLSPTESKPALQPSPPTSPVRTP and VPYR…EQGQ. A phosphoserine mark is found at Ser857 and Ser864. Thr867 is subject to Phosphothreonine. Ser868, Ser900, and Ser904 each carry phosphoserine. Pro residues predominate over residues 930-939; it reads DQPPAVPPLP. Positions 955 to 966 are enriched in basic and acidic residues; sequence RQSDERKRDREQ. Phosphoserine is present on residues Ser983 and Leu990. The disordered stretch occupies residues 1003 to 1024; that stretch reads GSESRYQTLPGRGLSGSTSRLQ. Residues 1064 to 1091 adopt a coiled-coil conformation; the sequence is QRGKMSAEEQLERMKRHQKALVRERKRT.

In terms of assembly, interacts with CAMSAP3 and CTNND1. Interacts (via WW domains) with TSPAN33 (via cytoplasmic domain) and with PDZD11; the interaction with TSPAN33 is dependent on PDZD11 being bound to PLEKHA7 and facilitates the docking of ADAM10 to zonula adherens through interaction of TSPAN33 with ADAM10. Expressed in kidney and lung (at protein level).

The protein resides in the cell junction. It is found in the adherens junction. It localises to the cytoplasm. Its subcellular location is the cytoskeleton. The protein localises to the microtubule organizing center. The protein resides in the centrosome. Functionally, required for zonula adherens biogenesis and maintenance. Acts via its interaction with CAMSAP3, which anchors microtubules at their minus-ends to zonula adherens, leading to the recruitment of KIFC3 kinesin to the junctional site. Mediates docking of ADAM10 to zonula adherens through a PDZD11-dependent interaction with the ADAM10-binding protein TSPAN33. This is Pleckstrin homology domain-containing family A member 7 (Plekha7) from Mus musculus (Mouse).